The primary structure comprises 389 residues: Cytochrome oxidase assembly protein SHY1 (389 aa).

Residues 1 to 71 lie on the Mitochondrial matrix side of the membrane; the sequence is MSLLGARSTY…SRRERSFGKK (71 aa). Residues 72–92 form a helical membrane-spanning segment; it reads IVLGLMFAMPIISFYLGTWQV. At 93–341 the chain is on the mitochondrial intermembrane side; the sequence is RRLKWKTKLI…KPTIDLKNNH (249 aa). Positions 292-311 are disordered; sequence GTQAVDNNTSKPRSRQEMPT. The chain crosses the membrane as a helical span at residues 342-362; that stretch reads LQYLVTWYGLSFLSTIFLIVA. Over 363–389 the chain is Mitochondrial matrix; it reads LRKAKRGGVVSQDQLMKEKLKHSRKYM.

This sequence belongs to the SURF1 family. Interacts with COA1, COX14 and MSS51.

The protein resides in the mitochondrion inner membrane. Required for efficient assembly of cytochrome c oxidase in the mitochondrial inner membrane. Involved in a step that couples MSS51-COX14-dependent regulation of COX1 translation to early steps of cytochrome c oxidase assembly. This Saccharomyces cerevisiae (strain ATCC 204508 / S288c) (Baker's yeast) protein is Cytochrome oxidase assembly protein SHY1 (SHY1).